The primary structure comprises 444 residues: Prenyltransferase phnF (444 aa).

This sequence belongs to the tryptophan dimethylallyltransferase family.

The catalysed reaction is 2,3,4,7,9-pentahydroxy-6-methyl-1H-phenalen-1-one + dimethylallyl diphosphate = 2,4,7,9-tetrahydroxy-6-methyl-8-(2-methylbut-3-en-2-yl)-1-oxo-1H-phenalen-3-ol + diphosphate. It participates in secondary metabolite biosynthesis. Functionally, prenyltransferase; part of the gene cluster that mediates the biosynthesis of phenalenones such as herqueinone, compounds that have been reported to treat tumors, bacterial infections and/or mycoses, and rheumatic diseases. The non-reducing polyketide synthase phnA synthesizes the heptaketide backbone and cyclizes it into the angular, hemiketal-containing naphtho-gamma-pyrone prephenalenone. The product template (PT) domain of phnA catalyzes only the C4-C9 aldol condensation, which is unprecedented among known PT domains. The transformation of prephenalenone to phenalenones requires an FAD-dependent monooxygenase phnB, which catalyzes the C2 aromatic hydroxylation of prephenalenone and ring opening of the gamma-pyrone ring simultaneously. Subsequent intramolecular deprotonation of C3 phenolic oxygen accelerates phenalenone ring closure to yield the tricyclic phenalenone core with a C2 hydroxylation. The prenyltransferase phnF further catalyzes reverse C-prenylation of phenalenone by direct electrophilic substitution at C6, or possibly via first a forward O-prenylation of a neighboring phenol in phenalenone, followed by a Claisen rearrangement. The hydroalkoxylation enzyme phnH catalyzes the 5-exo-trig cyclization via acid catalysis after the spontaneous deprotonation of 7-OH, which leads to the formation of the dihydrobenzofuran atrovenetin. Atrovenetin is further converted to deoxyherqueinone by the O-methyltransferase phnC which can methylate C2-OH to stabilize the northern portion of the phenalenone core. Finally, the oxidoreductase phnG converts deoxyherqueinone to herqueinone via C6 hydroxylation. This Penicillium herquei protein is Prenyltransferase phnF.